Reading from the N-terminus, the 308-residue chain is Transaldolase (308 aa).

Lys125 serves as the catalytic Schiff-base intermediate with substrate.

It belongs to the transaldolase family. Type 1 subfamily. In terms of assembly, homodimer.

It localises to the cytoplasm. The catalysed reaction is D-sedoheptulose 7-phosphate + D-glyceraldehyde 3-phosphate = D-erythrose 4-phosphate + beta-D-fructose 6-phosphate. It functions in the pathway carbohydrate degradation; pentose phosphate pathway; D-glyceraldehyde 3-phosphate and beta-D-fructose 6-phosphate from D-ribose 5-phosphate and D-xylulose 5-phosphate (non-oxidative stage): step 2/3. In terms of biological role, transaldolase is important for the balance of metabolites in the pentose-phosphate pathway. In Ectopseudomonas mendocina (strain ymp) (Pseudomonas mendocina), this protein is Transaldolase.